Here is a 1774-residue protein sequence, read N- to C-terminus: 6-methylsalicylic acid synthase (1774 aa).

Residues 1–14 (MHSAATSTYPSGKT) show a composition bias toward polar residues. Positions 1–21 (MHSAATSTYPSGKTSPAPVGT) are disordered. The 426-residue stretch at 32-457 (SNDVAVVGMA…GTVSHAVIEE (426 aa)) folds into the Ketosynthase family 3 (KS3) domain. The segment at 186-238 (RISYHLNLMGPSTAVDAACASSLVAIHHGVQAIRLGESKVAIVGGVNALCGPG) is acyltransferase. Active-site for beta-ketoacyl synthase activity residues include C204, H339, and H379. Positions 642-676 (NGITPQAVIGHSVGEIAASVVAGALSPAEGALIVT) are acetyl/malonyl transferases. The active-site For malonyltransferase activity is the S653. The segment at 926–1045 (HTLLGQRIPV…AYWDRKVAGS (120 aa)) is N-terminal hotdog fold. The region spanning 926-1202 (HTLLGQRIPV…FSEIEGTPGV (277 aa)) is the PKS/mFAS DH domain. H958 functions as the Proton acceptor; for dehydratase activity in the catalytic mechanism. The interval 1059-1202 (VTKLADNFSI…FSEIEGTPGV (144 aa)) is C-terminal hotdog fold. D1123 functions as the Proton donor; for dehydratase activity in the catalytic mechanism. The interval 1403–1450 (GPRLLPRPEGTYLITGGLGVLGLEVADFLVEKGARRLLLISRRALPPR) is 2-oxoacyl reductase. 1419–1424 (GLGVLG) is a binding site for NADP(+). A Carrier domain is found at 1698–1772 (AYLDEKIRGC…HLAVWFAEKL (75 aa)). S1732 is modified (O-(pantetheine 4'-phosphoryl)serine).

Homomultimer.

The catalysed reaction is 3 malonyl-CoA + acetyl-CoA + NADPH + 3 H(+) = 6-methylsalicylate + 3 CO2 + NADP(+) + 4 CoA + H2O. It functions in the pathway mycotoxin biosynthesis; patulin biosynthesis. In terms of biological role, this multifunctional enzyme is a polyketide synthase. It catalyzes a total of 11 steps by seven different component enzymes, in the biosynthesis of the antibiotic patulin. This Penicillium patulum (Penicillium griseofulvum) protein is 6-methylsalicylic acid synthase.